Here is a 357-residue protein sequence, read N- to C-terminus: Retinoic acid-induced protein 3 (357 aa).

The Extracellular segment spans residues 1 to 33; sequence MATTVPDGCRNGLKSKYYRLCDKAEAWGIVLET. A helical membrane pass occupies residues 34-54; it reads VATAGVVTSVAFMLTLPILVC. The Cytoplasmic portion of the chain corresponds to 55–68; sequence KVQDSNRRKMLPTQ. A helical transmembrane segment spans residues 69-89; it reads FLFLLGVLGIFGLTFAFIIGL. The Extracellular portion of the chain corresponds to 90–97; the sequence is DGSTGPTR. The chain crosses the membrane as a helical span at residues 98–118; sequence FFLFGILFSICFSCLLAHAVS. Topologically, residues 119-129 are cytoplasmic; the sequence is LTKLVRGRKPL. A helical transmembrane segment spans residues 130–150; sequence SLLVILGLAVGFSLVQDVIAI. Residues 151–176 lie on the Extracellular side of the membrane; sequence EYIVLTMNRTNVNVFSELSAPRRNED. Asparagine 158 carries N-linked (GlcNAc...) asparagine glycosylation. A helical transmembrane segment spans residues 177–197; that stretch reads FVLLLTYVLFLMALTFLMSSF. At 198-212 the chain is on the cytoplasmic side; sequence TFCGSFTGWKRHGAH. A helical membrane pass occupies residues 213-233; the sequence is IYLTMLLSIAIWVAWITLLML. The Extracellular segment spans residues 234-247; that stretch reads PDFDRRWDDTILSS. A helical membrane pass occupies residues 248–268; sequence ALAANGWVFLLAYVSPEFWLL. The Cytoplasmic segment spans residues 269-357; sequence TKQRNPMDYP…KDYEVKKEGS (89 aa). Serine 301 bears the Phosphoserine mark. Phosphotyrosine occurs at positions 317 and 320. The residue at position 345 (serine 345) is a Phosphoserine. 2 positions are modified to phosphotyrosine: tyrosine 347 and tyrosine 350.

It belongs to the G-protein coupled receptor 3 family. Interacts (via its transmembrane domain) with EGFR. In terms of processing, phosphorylated in two conserved double-tyrosine motifs, Tyr-317/Tyr-320 and Tyr-347/Tyr-350, by EGFR; leading to inactivation of the tumor suppressive function of GPRC5A in lung cancer cells. Tyr-317 and Tyr-320 are the preferred residues responsible for EGFR-mediated GPRC5A phosphorylation. In terms of tissue distribution, expressed at high level in fetal and adult lung tissues but repressed in most human lung cancers. Constitutively expressed in fetal kidney and adult placenta, kidney, prostate, testis, ovary, small intestine, colon, stomach, and spinal cord at low to moderate levels. Not detectable in fetal heart, brain, and liver and adult heart, brain, liver, skeletal muscle, pancreas, spleen, thymus, and peripheral leukocytes. According to PubMed:10783259, expressed at low but detectable level in pancreas and heart.

Its subcellular location is the cell membrane. The protein localises to the cytoplasmic vesicle membrane. In terms of biological role, orphan receptor. Could be involved in modulating differentiation and maintaining homeostasis of epithelial cells. This retinoic acid-inducible GPCR provide evidence for a possible interaction between retinoid and G-protein signaling pathways. Functions as a negative modulator of EGFR signaling. May act as a lung tumor suppressor. The chain is Retinoic acid-induced protein 3 (GPRC5A) from Homo sapiens (Human).